A 599-amino-acid polypeptide reads, in one-letter code: Sulfite reductase [NADPH] flavoprotein alpha-component (599 aa).

The 139-residue stretch at 64 to 202 (ITIISASQTG…AASEWRARVV (139 aa)) folds into the Flavodoxin-like domain. FMN contacts are provided by residues 70–75 (SQTGNA), 117–120 (STQG), and 153–162 (LGDSSYEFFC). An FAD-binding FR-type domain is found at 234–448 (DAPLVASLSV…IEHNDNFRLP (215 aa)). Residues threonine 322, alanine 356, 386-389 (RLYS), 404-406 (TVG), tyrosine 410, and 419-422 (GGAS) each bind FAD. NADP(+)-binding positions include 519–520 (SR), 525–529 (KVYVQ), and aspartate 561. FAD is bound at residue tyrosine 599.

This sequence belongs to the NADPH-dependent sulphite reductase flavoprotein subunit CysJ family. It in the N-terminal section; belongs to the flavodoxin family. In the C-terminal section; belongs to the flavoprotein pyridine nucleotide cytochrome reductase family. In terms of assembly, alpha(8)-beta(8). The alpha component is a flavoprotein, the beta component is a hemoprotein. FAD serves as cofactor. The cofactor is FMN.

It carries out the reaction hydrogen sulfide + 3 NADP(+) + 3 H2O = sulfite + 3 NADPH + 4 H(+). The protein operates within sulfur metabolism; hydrogen sulfide biosynthesis; hydrogen sulfide from sulfite (NADPH route): step 1/1. Its function is as follows. Component of the sulfite reductase complex that catalyzes the 6-electron reduction of sulfite to sulfide. This is one of several activities required for the biosynthesis of L-cysteine from sulfate. The flavoprotein component catalyzes the electron flow from NADPH -&gt; FAD -&gt; FMN to the hemoprotein component. The protein is Sulfite reductase [NADPH] flavoprotein alpha-component of Escherichia coli (strain K12).